Here is a 673-residue protein sequence, read N- to C-terminus: Exoribonuclease 2 (673 aa).

The RNB domain occupies 191 to 516; it reads RTDLTATPFF…NHRLLKAVIA (326 aa). Residues 562–645 form the S1 motif domain; it reads DKVFNAEIID…ETRSLIAKPA (84 aa). The segment at 650-673 is disordered; it reads PGPAPVAPTSEADATPADEAPKAE.

Belongs to the RNR ribonuclease family. RNase II subfamily.

It is found in the cytoplasm. The catalysed reaction is Exonucleolytic cleavage in the 3'- to 5'-direction to yield nucleoside 5'-phosphates.. In terms of biological role, involved in mRNA degradation. Hydrolyzes single-stranded polyribonucleotides processively in the 3' to 5' direction. The polypeptide is Exoribonuclease 2 (Aeromonas hydrophila subsp. hydrophila (strain ATCC 7966 / DSM 30187 / BCRC 13018 / CCUG 14551 / JCM 1027 / KCTC 2358 / NCIMB 9240 / NCTC 8049)).